A 243-amino-acid chain; its full sequence is Protein unc-119 homolog B (243 aa).

Over residues methionine 1–alanine 21 the composition is skewed to polar residues. Residues methionine 1–valine 49 form a disordered region. Tyrosine 134 is a tetradecanoate binding site.

It belongs to the PDE6D/unc-119 family. As to expression, detected in embryo. Detected in larvae four days after fertilization, in retina and neural tissues (at protein level). Detected in embryos at the sphere stage, during gastrulation, somitogenesis and in swimming larvae, both within and outside of the developing nervous system. Detected in adults.

The protein resides in the cell projection. It localises to the cilium. Functionally, myristoyl-binding protein that acts as a cargo adapter: specifically binds the myristoyl moiety of a subset of N-terminally myristoylated proteins and is required for their localization. Plays a key role in localization of proteins to the primary cilium membrane. This Danio rerio (Zebrafish) protein is Protein unc-119 homolog B (unc119b).